The chain runs to 218 residues: Nuclear cap-binding protein subunit 2 (218 aa).

MRNA-binding positions include Tyr24, Tyr49, 118 to 122 (TIDLD), 129 to 133 (RQFGR), and 139 to 140 (QV). In terms of domain architecture, RRM spans 46 to 124 (ATIYVGNLSF…REITIDLDPG (79 aa)). A compositionally biased stretch (basic residues) spans 176 to 194 (DPHKNHHHHHHGHHHHHGQ). A disordered region spans residues 176–200 (DPHKNHHHHHHGHHHHHGQPHAAAA).

It belongs to the RRM NCBP2 family. As to quaternary structure, component of the nuclear cap-binding complex (CBC).

It is found in the nucleus. In terms of biological role, component of the cap-binding complex (CBC) involved in the nuclear export of capped U snRNAs. The CBC complex is required for efficient pre-mRNA splicing through efficient commitment complex and spliceosome formation; and involved in rRNA processing at sites A0, A1 and A2. In Eremothecium gossypii (strain ATCC 10895 / CBS 109.51 / FGSC 9923 / NRRL Y-1056) (Yeast), this protein is Nuclear cap-binding protein subunit 2 (CBC2).